A 161-amino-acid polypeptide reads, in one-letter code: Dihydrofolate reductase (161 aa).

Residues Asn2–Arg161 enclose the DHFR domain. Ile6–Ala8 is a binding site for substrate. NADP(+)-binding positions include Ala7–Ala8 and Ile15–Lys20. A substrate-binding site is contributed by Asp28. Residue Gly44 to Thr47 participates in NADP(+) binding. Arg59 contributes to the substrate binding site. NADP(+) contacts are provided by residues Ile64–Ser66 and Ile96–Ile101. Thr115 is a binding site for substrate.

Belongs to the dihydrofolate reductase family.

It catalyses the reaction (6S)-5,6,7,8-tetrahydrofolate + NADP(+) = 7,8-dihydrofolate + NADPH + H(+). It functions in the pathway cofactor biosynthesis; tetrahydrofolate biosynthesis; 5,6,7,8-tetrahydrofolate from 7,8-dihydrofolate: step 1/1. Functionally, key enzyme in folate metabolism. Catalyzes an essential reaction for de novo glycine and purine synthesis, and for DNA precursor synthesis. This Buchnera aphidicola subsp. Acyrthosiphon pisum (strain APS) (Acyrthosiphon pisum symbiotic bacterium) protein is Dihydrofolate reductase (folA).